Here is a 329-residue protein sequence, read N- to C-terminus: Transcription factor RF2b (329 aa).

2 disordered regions span residues 1–24 and 62–97; these read MQEP…RSEV and SSGP…DGSG. A bZIP domain is found at 132 to 195; that stretch reads DPKRAKRILA…TGLSAENAEL (64 aa). A basic motif region spans residues 134-155; sequence KRAKRILANRQSAARSKERKAR. Residues 160–174 form a leucine-zipper region; that stretch reads LERKVQTLQTEATTL. Residues 260–303 are disordered; it reads RQNGGTQLPPQFQPPRPNVPNHMLSHPNGLQDIMQQDPLGRLQG.

This sequence belongs to the bZIP family. As to quaternary structure, binds DNA as a homodimer or as a heterodimer with RF2a. The heterodimer binds stronger to DNA than the homodimer. In terms of tissue distribution, expressed at high levels in roots, low level in leaf sheath, but not in leaf blade. Predominantly expressed in vascular tissues.

The protein localises to the nucleus. In terms of biological role, transcription factor probably involved in vascular development and shoot tissue organization. Binds to the DNA sequence 5'-CCGAGTGTGCCCCTGG-3' present in the promoter region Box II of the phloem-specific rice tungro bacilliform virus (RTBV) promoter. May regulate tissue-specific expression of the RTBV promoter and virus replication. This Oryza sativa subsp. japonica (Rice) protein is Transcription factor RF2b (RF2b).